The sequence spans 202 residues: Ribonuclease HII (202 aa).

An RNase H type-2 domain is found at 18–202 (GQYAGVDEVG…KSFRPVREAM (185 aa)). 3 residues coordinate a divalent metal cation: Asp24, Glu25, and Asp116.

The protein belongs to the RNase HII family. Mn(2+) is required as a cofactor. Mg(2+) serves as cofactor.

Its subcellular location is the cytoplasm. The catalysed reaction is Endonucleolytic cleavage to 5'-phosphomonoester.. Its function is as follows. Endonuclease that specifically degrades the RNA of RNA-DNA hybrids. This is Ribonuclease HII from Shewanella piezotolerans (strain WP3 / JCM 13877).